The chain runs to 418 residues: CinA-like protein (418 aa).

It belongs to the CinA family.

The polypeptide is CinA-like protein (Leptospira interrogans serogroup Icterohaemorrhagiae serovar Lai (strain 56601)).